The sequence spans 168 residues: Troponin I, cardiac muscle (168 aa).

The span at 128-147 shows a compositional bias: basic and acidic residues; the sequence is VRKDDAEKESREVGDWRKNV. The segment at 128–168 is disordered; that stretch reads VRKDDAEKESREVGDWRKNVDALSGMEGRKKKFEAPGGGQG.

Belongs to the troponin I family. As to quaternary structure, binds to actin and tropomyosin.

Its function is as follows. Troponin I is the inhibitory subunit of troponin, the thin filament regulatory complex which confers calcium-sensitivity to striated muscle actomyosin ATPase activity. This Gallus gallus (Chicken) protein is Troponin I, cardiac muscle (TNNI3).